The sequence spans 400 residues: Octopine dehydrogenase (400 aa).

NADH-binding positions include 10 to 13 (GGNG) and 35 to 38 (FADE). Positions 118 and 143 each coordinate pyruvate. Glutamine 118 contributes to the substrate binding site. Cysteine 148 is a binding site for NAD(+). L-arginine is bound at residue methionine 206. Histidine 212 lines the pyruvate pocket. Histidine 212 is an active-site residue. An NAD(+)-binding site is contributed by arginine 324.

The protein belongs to the lysopine/nopaline/octopine/opine/vitopine dehydrogenases family.

It carries out the reaction D-octopine + NAD(+) + H2O = L-arginine + pyruvate + NADH + H(+). In terms of biological role, catalyzes the reverse reaction of octopine dehydrogenation. Acts on L-arginine in preference to other substrates. In Mizuhopecten yessoensis (Japanese scallop), this protein is Octopine dehydrogenase.